The primary structure comprises 453 residues: Validoxylamine A glucosyltransferase (453 aa).

It belongs to the glycosyltransferase 2 family. Mn(2+) serves as cofactor.

The enzyme catalyses validoxylamine A + UDP-alpha-D-glucose = validamycin A + UDP + H(+). Involved in the biosynthesis of the antifungal agent validamycin A. Catalyzes the final attachment of glucose from UDP-alpha-D-glucose to validoxylamine A to yield validamycin A. This chain is Validoxylamine A glucosyltransferase, found in Streptomyces hygroscopicus subsp. limoneus.